Here is a 294-residue protein sequence, read N- to C-terminus: Tissue factor (294 aa).

A signal peptide spans Met1–Gly28. At Ala29–Glu251 the chain is on the extracellular side. N-linked (GlcNAc...) asparagine glycosylation is found at Asn37 and Asn57. Cys75 and Cys83 are oxidised to a cystine. Asn169 and Asn200 each carry an N-linked (GlcNAc...) asparagine glycan. Residues Cys218 and Cys241 are joined by a disulfide bond. Residues Trp245–Ser247 carry the WKS motif motif. A helical membrane pass occupies residues Thr252–Leu274. Cys275 carries S-palmitoyl cysteine lipidation. The Cytoplasmic portion of the chain corresponds to Cys275–Ala294.

The protein belongs to the tissue factor family. As to quaternary structure, interacts with HSPE; the interaction, inhibited by heparin, promotes the generation of activated factor X and activates coagulation in the presence of activated factor VII.

It is found in the membrane. Initiates blood coagulation by forming a complex with circulating factor VII or VIIa. The [TF:VIIa] complex activates factors IX or X by specific limited proteolysis. TF plays a role in normal hemostasis by initiating the cell-surface assembly and propagation of the coagulation protease cascade. This is Tissue factor (F3) from Mus musculus (Mouse).